We begin with the raw amino-acid sequence, 768 residues long: Protein ITPRID2 (768 aa).

Disordered regions lie at residues 1–24 (MTTEDHLLRTASQHSDSSGFAEDS), 39–78 (LQAMGSSADSCDSETTVTSLGEDLATPTAQDQPYFNESEE), and 98–124 (RKSGSQDFPQCNTIENPGTKQSTCSPG). 2 stretches are compositionally biased toward polar residues: residues 39 to 57 (LQAMGSSADSCDSETTVTS) and 102 to 122 (SQDFPQCNTIENPGTKQSTCS). A phosphoserine mark is found at serine 153, serine 177, serine 246, serine 248, serine 255, serine 268, serine 276, and serine 312. The tract at residues 315–338 (SVKKEEAPQSEAPRVEECHHGRTP) is disordered. A compositionally biased stretch (basic and acidic residues) spans 316-334 (VKKEEAPQSEAPRVEECHH). Lysine 317 participates in a covalent cross-link: Glycyl lysine isopeptide (Lys-Gly) (interchain with G-Cter in SUMO2). A phosphoserine mark is found at serine 378 and serine 411. Residues 468 to 546 (QELQVMRRSL…GLEEQLRAVR (79 aa)) are a coiled coil. 6 positions are modified to phosphoserine: serine 549, serine 564, serine 569, serine 572, serine 627, and serine 643. 2 disordered regions span residues 605–647 (IPPG…VGKP) and 663–718 (ALTP…AAEE). Residues 610-627 (SSESVFSQATSESSSVCS) are compositionally biased toward polar residues. Threonine 665 carries the phosphothreonine modification. Polar residues predominate over residues 667 to 677 (TAPSRTGSVQT). Serine 670 carries the phosphoserine modification. Threonine 677 carries the post-translational modification Phosphothreonine. A compositionally biased stretch (acidic residues) spans 682-694 (ESSEEVDAAEEAP).

Its subcellular location is the cytoplasm. In Pongo abelii (Sumatran orangutan), this protein is Protein ITPRID2.